Here is a 121-residue protein sequence, read N- to C-terminus: Putative iron-sulfur cluster insertion protein ErpA (121 aa).

Iron-sulfur cluster is bound by residues C49, C113, and C115.

The protein belongs to the HesB/IscA family. As to quaternary structure, homodimer. Requires iron-sulfur cluster as cofactor.

In terms of biological role, required for insertion of 4Fe-4S clusters. The sequence is that of Putative iron-sulfur cluster insertion protein ErpA from Nitrosomonas eutropha (strain DSM 101675 / C91 / Nm57).